A 259-amino-acid polypeptide reads, in one-letter code: Phosphatidylglycerol--prolipoprotein diacylglyceryl transferase (259 aa).

The next 4 helical transmembrane spans lie at 12-32 (LAIH…VYLA), 41-61 (ISSD…IVGA), 80-100 (IIAI…GALV), and 109-129 (VLNP…AQAI). Residue Arg-131 coordinates a 1,2-diacyl-sn-glycero-3-phospho-(1'-sn-glycerol). 3 consecutive transmembrane segments (helical) span residues 167-187 (IPTF…IMMW), 194-214 (LLDG…RLVI), and 226-246 (GIRI…IFVI).

This sequence belongs to the Lgt family.

It is found in the cell membrane. The catalysed reaction is L-cysteinyl-[prolipoprotein] + a 1,2-diacyl-sn-glycero-3-phospho-(1'-sn-glycerol) = an S-1,2-diacyl-sn-glyceryl-L-cysteinyl-[prolipoprotein] + sn-glycerol 1-phosphate + H(+). It functions in the pathway protein modification; lipoprotein biosynthesis (diacylglyceryl transfer). Catalyzes the transfer of the diacylglyceryl group from phosphatidylglycerol to the sulfhydryl group of the N-terminal cysteine of a prolipoprotein, the first step in the formation of mature lipoproteins. The protein is Phosphatidylglycerol--prolipoprotein diacylglyceryl transferase of Streptococcus pyogenes serotype M3 (strain ATCC BAA-595 / MGAS315).